The sequence spans 363 residues: Phosphoribosylformylglycinamidine cyclo-ligase (363 aa).

Belongs to the AIR synthase family.

The protein localises to the cytoplasm. The enzyme catalyses 2-formamido-N(1)-(5-O-phospho-beta-D-ribosyl)acetamidine + ATP = 5-amino-1-(5-phospho-beta-D-ribosyl)imidazole + ADP + phosphate + H(+). It functions in the pathway purine metabolism; IMP biosynthesis via de novo pathway; 5-amino-1-(5-phospho-D-ribosyl)imidazole from N(2)-formyl-N(1)-(5-phospho-D-ribosyl)glycinamide: step 2/2. The sequence is that of Phosphoribosylformylglycinamidine cyclo-ligase from Bartonella tribocorum (strain CIP 105476 / IBS 506).